A 108-amino-acid polypeptide reads, in one-letter code: uncharacterized protein (108 aa).

Positions 1-108 are disordered; sequence MAKVTSEPQK…DKEQSETSVL (108 aa). Positions 26-56 are enriched in basic residues; that stretch reads KGRKKGKTPRQRRSRSGVKGLKTTRKAKRPL. Residues 58–70 are compositionally biased toward polar residues; sequence GSSSQKAGETNTP. The span at 73–92 shows a compositional bias: basic residues; sequence KPKKARGPILRGRYHRLKEK. The span at 93–108 shows a compositional bias: basic and acidic residues; that stretch reads MKKEEADKEQSETSVL.

This is an uncharacterized protein from Homo sapiens (Human).